Reading from the N-terminus, the 24-residue chain is Unknown protein NF004 from 2D-PAGE (24 aa).

This is Unknown protein NF004 from 2D-PAGE from Naegleria fowleri (Brain eating amoeba).